Reading from the N-terminus, the 95-residue chain is Co-chaperonin GroES (95 aa).

It belongs to the GroES chaperonin family. As to quaternary structure, heptamer of 7 subunits arranged in a ring. Interacts with the chaperonin GroEL.

The protein localises to the cytoplasm. Its function is as follows. Together with the chaperonin GroEL, plays an essential role in assisting protein folding. The GroEL-GroES system forms a nano-cage that allows encapsulation of the non-native substrate proteins and provides a physical environment optimized to promote and accelerate protein folding. GroES binds to the apical surface of the GroEL ring, thereby capping the opening of the GroEL channel. This is Co-chaperonin GroES from Marinobacter nauticus (strain ATCC 700491 / DSM 11845 / VT8) (Marinobacter aquaeolei).